Here is a 491-residue protein sequence, read N- to C-terminus: tRNA-2-methylthio-N(6)-dimethylallyladenosine synthase (491 aa).

An MTTase N-terminal domain is found at 54–172 (KTYHIKTFGC…ILNLLEQVIF (119 aa)). Residues Cys-63, Cys-99, Cys-133, Cys-209, Cys-213, and Cys-216 each contribute to the [4Fe-4S] cluster site. The Radical SAM core domain maps to 195–426 (RTNNLKGFVN…NEMVKTFSKK (232 aa)). One can recognise a TRAM domain in the interval 429 to 491 (EKYVNKVLDV…RFTLNGKMID (63 aa)).

The protein belongs to the methylthiotransferase family. MiaB subfamily. Monomer. The cofactor is [4Fe-4S] cluster.

Its subcellular location is the cytoplasm. The enzyme catalyses N(6)-dimethylallyladenosine(37) in tRNA + (sulfur carrier)-SH + AH2 + 2 S-adenosyl-L-methionine = 2-methylsulfanyl-N(6)-dimethylallyladenosine(37) in tRNA + (sulfur carrier)-H + 5'-deoxyadenosine + L-methionine + A + S-adenosyl-L-homocysteine + 2 H(+). Its function is as follows. Catalyzes the methylthiolation of N6-(dimethylallyl)adenosine (i(6)A), leading to the formation of 2-methylthio-N6-(dimethylallyl)adenosine (ms(2)i(6)A) at position 37 in tRNAs that read codons beginning with uridine. This chain is tRNA-2-methylthio-N(6)-dimethylallyladenosine synthase, found in Malacoplasma penetrans (strain HF-2) (Mycoplasma penetrans).